The following is a 253-amino-acid chain: Dihydroanticapsin 7-dehydrogenase (253 aa).

An NAD(+)-binding site is contributed by Leu9–Asn31. A substrate-binding site is contributed by Ser139. Tyr152 (proton acceptor) is an active-site residue.

It belongs to the short-chain dehydrogenases/reductases (SDR) family.

It carries out the reaction L-dihydroanticapsin + NAD(+) = L-anticapsin + NADH + H(+). Its pathway is antibiotic biosynthesis; bacilysin biosynthesis. Its function is as follows. Part of the bacABCDEFG operon responsible for the biosynthesis of bacilysin, an irreversible inactivator of the glutaminase domain of glucosamine synthetase. Catalyzes the dehydrogenation of the C7-hydroxyl group in the 4S-tetrahydrotyrosine (4S-H4Tyr) to yield anticapsin (epoxycyclohexanonyl-Ala). The chain is Dihydroanticapsin 7-dehydrogenase from Bacillus subtilis.